A 59-amino-acid polypeptide reads, in one-letter code: Large ribosomal subunit protein bL32 (59 aa).

Disordered stretches follow at residues 1-23 (MAVQQNKKSPSKRGMHRSHDFLT) and 35-59 (EVHLRHHVSPNGYYRGKKVVKTKND). Residues 49–59 (RGKKVVKTKND) show a composition bias toward basic residues.

Belongs to the bacterial ribosomal protein bL32 family.

This chain is Large ribosomal subunit protein bL32, found in Burkholderia ambifaria (strain MC40-6).